A 302-amino-acid chain; its full sequence is Urease accessory protein UreD 2 (302 aa).

Belongs to the UreD family. As to quaternary structure, ureD, UreF and UreG form a complex that acts as a GTP-hydrolysis-dependent molecular chaperone, activating the urease apoprotein by helping to assemble the nickel containing metallocenter of UreC. The UreE protein probably delivers the nickel.

The protein localises to the cytoplasm. Required for maturation of urease via the functional incorporation of the urease nickel metallocenter. In Brucella melitensis biotype 1 (strain ATCC 23456 / CCUG 17765 / NCTC 10094 / 16M), this protein is Urease accessory protein UreD 2.